The primary structure comprises 469 residues: Light-independent protochlorophyllide reductase subunit N (469 aa).

Residues cysteine 24, cysteine 49, and cysteine 109 each coordinate [4Fe-4S] cluster.

The protein belongs to the BchN/ChlN family. Protochlorophyllide reductase is composed of three subunits; ChlL, ChlN and ChlB. Forms a heterotetramer of two ChlB and two ChlN subunits. The cofactor is [4Fe-4S] cluster.

The enzyme catalyses chlorophyllide a + oxidized 2[4Fe-4S]-[ferredoxin] + 2 ADP + 2 phosphate = protochlorophyllide a + reduced 2[4Fe-4S]-[ferredoxin] + 2 ATP + 2 H2O. The protein operates within porphyrin-containing compound metabolism; chlorophyll biosynthesis (light-independent). Functionally, component of the dark-operative protochlorophyllide reductase (DPOR) that uses Mg-ATP and reduced ferredoxin to reduce ring D of protochlorophyllide (Pchlide) to form chlorophyllide a (Chlide). This reaction is light-independent. The NB-protein (ChlN-ChlB) is the catalytic component of the complex. The sequence is that of Light-independent protochlorophyllide reductase subunit N from Synechocystis sp. (strain ATCC 27184 / PCC 6803 / Kazusa).